A 324-amino-acid polypeptide reads, in one-letter code: Glyoxylate/hydroxypyruvate reductase B (324 aa).

Active-site residues include Arg-237 and Glu-266. Residue His-285 is the Proton donor of the active site.

The protein belongs to the D-isomer specific 2-hydroxyacid dehydrogenase family. GhrB subfamily. As to quaternary structure, homodimer.

It localises to the cytoplasm. The enzyme catalyses glycolate + NADP(+) = glyoxylate + NADPH + H(+). It carries out the reaction (R)-glycerate + NAD(+) = 3-hydroxypyruvate + NADH + H(+). It catalyses the reaction (R)-glycerate + NADP(+) = 3-hydroxypyruvate + NADPH + H(+). In terms of biological role, catalyzes the NADPH-dependent reduction of glyoxylate and hydroxypyruvate into glycolate and glycerate, respectively. The polypeptide is Glyoxylate/hydroxypyruvate reductase B (Escherichia coli (strain ATCC 8739 / DSM 1576 / NBRC 3972 / NCIMB 8545 / WDCM 00012 / Crooks)).